We begin with the raw amino-acid sequence, 385 residues long: Alkanesulfonate monooxygenase (385 aa).

Belongs to the SsuD family.

It catalyses the reaction an alkanesulfonate + FMNH2 + O2 = an aldehyde + FMN + sulfite + H2O + 2 H(+). Catalyzes the desulfonation of aliphatic sulfonates. The chain is Alkanesulfonate monooxygenase from Burkholderia pseudomallei (strain 1710b).